The sequence spans 209 residues: High frequency lysogenization protein HflD homolog (209 aa).

Belongs to the HflD family.

Its subcellular location is the cytoplasm. It is found in the cell inner membrane. The protein is High frequency lysogenization protein HflD homolog of Saccharophagus degradans (strain 2-40 / ATCC 43961 / DSM 17024).